Here is a 200-residue protein sequence, read N- to C-terminus: Holliday junction branch migration complex subunit RuvA (200 aa).

Residues 1–64 form a domain I region; it reads MIGRIVGTLI…EDSHTLYGFI (64 aa). Residues 65–143 form a domain II region; it reads DKNERALFRV…QAAKTDLFSA (79 aa). The flexible linker stretch occupies residues 144-149; the sequence is PAVLRQ. Residues 150-200 form a domain III region; it reads VQADPRQEAEAALISLGYKPQEAAKAIAGVPVDAANSEDVIKAALKGMLRK.

This sequence belongs to the RuvA family. Homotetramer. Forms an RuvA(8)-RuvB(12)-Holliday junction (HJ) complex. HJ DNA is sandwiched between 2 RuvA tetramers; dsDNA enters through RuvA and exits via RuvB. An RuvB hexamer assembles on each DNA strand where it exits the tetramer. Each RuvB hexamer is contacted by two RuvA subunits (via domain III) on 2 adjacent RuvB subunits; this complex drives branch migration. In the full resolvosome a probable DNA-RuvA(4)-RuvB(12)-RuvC(2) complex forms which resolves the HJ.

It is found in the cytoplasm. In terms of biological role, the RuvA-RuvB-RuvC complex processes Holliday junction (HJ) DNA during genetic recombination and DNA repair, while the RuvA-RuvB complex plays an important role in the rescue of blocked DNA replication forks via replication fork reversal (RFR). RuvA specifically binds to HJ cruciform DNA, conferring on it an open structure. The RuvB hexamer acts as an ATP-dependent pump, pulling dsDNA into and through the RuvAB complex. HJ branch migration allows RuvC to scan DNA until it finds its consensus sequence, where it cleaves and resolves the cruciform DNA. This Marinomonas sp. (strain MWYL1) protein is Holliday junction branch migration complex subunit RuvA.